We begin with the raw amino-acid sequence, 312 residues long: Ribosomal RNA small subunit methyltransferase H (312 aa).

Residues 34-36 (GGH), aspartate 54, phenylalanine 78, aspartate 100, and glutamine 107 contribute to the S-adenosyl-L-methionine site.

Belongs to the methyltransferase superfamily. RsmH family.

The protein resides in the cytoplasm. The catalysed reaction is cytidine(1402) in 16S rRNA + S-adenosyl-L-methionine = N(4)-methylcytidine(1402) in 16S rRNA + S-adenosyl-L-homocysteine + H(+). Its function is as follows. Specifically methylates the N4 position of cytidine in position 1402 (C1402) of 16S rRNA. The protein is Ribosomal RNA small subunit methyltransferase H of Salmonella choleraesuis (strain SC-B67).